The chain runs to 113 residues: Flagellar hook-basal body complex protein FliE (113 aa).

It belongs to the FliE family.

The protein resides in the bacterial flagellum basal body. The protein is Flagellar hook-basal body complex protein FliE of Burkholderia mallei (strain NCTC 10247).